The chain runs to 257 residues: Acetylglutamate kinase (257 aa).

Substrate-binding positions include 43–44 (GG), Arg-65, and Asn-157. ATP-binding positions include 180–185 (DVSGIL) and 208–210 (IIT).

This sequence belongs to the acetylglutamate kinase family. ArgB subfamily. In terms of assembly, homodimer.

It localises to the cytoplasm. The catalysed reaction is N-acetyl-L-glutamate + ATP = N-acetyl-L-glutamyl 5-phosphate + ADP. It functions in the pathway amino-acid biosynthesis; L-arginine biosynthesis; N(2)-acetyl-L-ornithine from L-glutamate: step 2/4. Its function is as follows. Catalyzes the ATP-dependent phosphorylation of N-acetyl-L-glutamate. This is Acetylglutamate kinase from Edwardsiella ictaluri (strain 93-146).